The chain runs to 177 residues: N-acetylmuramoyl-L-alanine amidase A (177 aa).

The 136-residue stretch at 23–158 folds into the N-acetylmuramoyl-L-alanine amidase domain; the sequence is QTSAVIMHTM…SGNENRYDPG (136 aa). Cysteines 114 and 121 form a disulfide.

Its subcellular location is the secreted. It catalyses the reaction Hydrolyzes the link between N-acetylmuramoyl residues and L-amino acid residues in certain cell-wall glycopeptides.. Functionally, antibacterial activity against Gram-positive bacteria M.luteus, S.aureus, E.faecalis and P.acidilactici and Gram-negative bacterium E.coli. The protein is N-acetylmuramoyl-L-alanine amidase A (cwhA) of Achromobacter lyticus.